A 760-amino-acid polypeptide reads, in one-letter code: MDSNLIFDQKVINGFAPVLTYAACEWFLILLMFIDALLSYLLVWFARYCRLQMPCFLCSKLLHPLHWRFLLCRNHRSEVSSYMSCQNHGNNLADCRGMCDDCLLSFTKMTGPNPDMNRLLLGKLGYDLLSRSHFAHPRSCSCCNKPWRTRHHTQRLIRLGSRGRNSSSKPNIPAPRHLTRRGSGGSLKKMRDHIATSGSEYVDVGSRDGMAHVGYTELKIHSDSESEFLFSDDDAFLHITDFNVEPSEKRTHKSRRRKSFDDKKMSNHKQPVLQDNQYKKIHVEDNETVESSMLGYNLENRTRQKQPVKAKEHDDVLSELITMSEARPFLLGSPRKYAAGVVTQNENEAEVSGSSSPSGGEFLSPSAENGASREIRIQEHDDSSDFSQNITSSAMEIEEFEAAIEQKESDHMDVSGSVANEPSSDEENEVEGDSKPLISNNMSDSLEQEQSGEEESEVNENNVAEEYFSNEEEDEVNGHTEPLTSKSESGSFAEEQSSEDEDGSNIYSVAKDHSSNEEDVDNEESEPMTSNNVTGVVKEEHSAKEEHGDHEETEPLTSLNISKEEPSLEHSDKDSLKITETRNTSNGSPELKHSASVESFVSISSDIEGESLVEVLKQQLEHGRKSLRDLNKEFEEERNASAIATNQAMAMITRLQEEKAALHMEALQYLRMMDEQAEHDMDALERANDVLADREKEIQDLEMELEYYRVKYPDEPREEILASMGILGNTEETNVTSPTDETSIKDSTDTKLTGSPSAEN.

Residues 26 to 46 traverse the membrane as a helical segment; it reads WFLILLMFIDALLSYLLVWFA. 4 disordered regions span residues 161–189, 247–273, 292–311, and 348–595; these read SRGRNSSSKPNIPAPRHLTRRGSGGSLKK, SEKRTHKSRRRKSFDDKKMSNHKQPVL, SMLGYNLENRTRQKQPVKAK, and EAEV…KHSA. Residues 352 to 366 show a composition bias toward low complexity; it reads SGSSSPSGGEFLSPS. A compositionally biased stretch (basic and acidic residues) spans 371 to 383; that stretch reads ASREIRIQEHDDS. A compositionally biased stretch (polar residues) spans 385–394; it reads DFSQNITSSA. Positions 388-416 form a coiled coil; the sequence is QNITSSAMEIEEFEAAIEQKESDHMDVSG. A compositionally biased stretch (basic and acidic residues) spans 404–413; that stretch reads IEQKESDHMD. 2 stretches are compositionally biased toward acidic residues: residues 446-458 and 517-526; these read LEQEQSGEEESEV and EEDVDNEESE. Composition is skewed to basic and acidic residues over residues 537–550 and 562–580; these read VKEEHSAKEEHGDH and SKEEPSLEHSDKDSLKITE. The GTD-binding domain occupies 611–709; sequence SLVEVLKQQL…DLEMELEYYR (99 aa). The interval 725-760 is disordered; the sequence is GILGNTEETNVTSPTDETSIKDSTDTKLTGSPSAEN. 2 stretches are compositionally biased toward polar residues: residues 730–741 and 750–760; these read TEETNVTSPTDE and TKLTGSPSAEN.

It localises to the endomembrane system. Membrane-anchored myosin receptors that define a distinct, plant-specific transport vesicle compartment. This chain is Probable myosin-binding protein 4, found in Arabidopsis thaliana (Mouse-ear cress).